We begin with the raw amino-acid sequence, 173 residues long: Peptide deformylase (173 aa).

C91 and H133 together coordinate Fe cation. E134 is a catalytic residue. Residue H137 coordinates Fe cation.

It belongs to the polypeptide deformylase family. Fe(2+) serves as cofactor.

It carries out the reaction N-terminal N-formyl-L-methionyl-[peptide] + H2O = N-terminal L-methionyl-[peptide] + formate. Functionally, removes the formyl group from the N-terminal Met of newly synthesized proteins. Requires at least a dipeptide for an efficient rate of reaction. N-terminal L-methionine is a prerequisite for activity but the enzyme has broad specificity at other positions. This chain is Peptide deformylase, found in Blochmanniella pennsylvanica (strain BPEN).